The chain runs to 335 residues: Large ribosomal subunit protein uL10 (335 aa).

The tract at residues 306-335 is disordered; sequence VEETVEEEEEEEEEEDAEEEAAAGLGALFG. Residues 308 to 326 are compositionally biased toward acidic residues; sequence ETVEEEEEEEEEEDAEEEA.

This sequence belongs to the universal ribosomal protein uL10 family. As to quaternary structure, part of the 50S ribosomal subunit. Forms part of the ribosomal stalk which helps the ribosome interact with GTP-bound translation factors. Forms a heptameric L10(L12)2(L12)2(L12)2 complex, where L10 forms an elongated spine to which the L12 dimers bind in a sequential fashion.

Forms part of the ribosomal stalk, playing a central role in the interaction of the ribosome with GTP-bound translation factors. The chain is Large ribosomal subunit protein uL10 from Methanobrevibacter smithii (strain ATCC 35061 / DSM 861 / OCM 144 / PS).